Here is a 128-residue protein sequence, read N- to C-terminus: Large ribosomal subunit protein bL17 (128 aa).

Belongs to the bacterial ribosomal protein bL17 family. As to quaternary structure, part of the 50S ribosomal subunit. Contacts protein L32.

The protein is Large ribosomal subunit protein bL17 of Streptococcus pneumoniae serotype 4 (strain ATCC BAA-334 / TIGR4).